Consider the following 317-residue polypeptide: Insulin-like growth factor-binding protein 2 (317 aa).

Positions 1–33 (MQPRLGGPALLLLPPLLLLLLLGAGGGDCGARA) are cleaved as a signal peptide. An IGFBP N-terminal domain is found at 35 to 126 (VLFRCPPCTP…VHGEGTCEKH (92 aa)). 6 disulfide bridges follow: Cys-39–Cys-76, Cys-42–Cys-78, Cys-50–Cys-79, Cys-68–Cys-82, Cys-90–Cys-103, and Cys-97–Cys-123. Disordered stretches follow at residues 126 to 146 (HGDA…EEHS) and 190 to 218 (QHRQ…ARTP). The 83-residue stretch at 216–298 (RTPCQQELDQ…APTIRGDPEC (83 aa)) folds into the Thyroglobulin type-1 domain. Disulfide bonds link Cys-219–Cys-253, Cys-264–Cys-275, and Cys-277–Cys-298. The Cell attachment site motif lies at 293 to 295 (RGD).

In terms of assembly, interacts with IGF1. Interacts with IGF2. Interacts (via RGD motif) with integrin alpha5/ITGA5; this interaction induces cell migration, adhesion or apoptosis according to the context. Interacts with PTPRB; this interaction leads to PTPRB dimerization and inactivation. Cleaved by MMP9 leading to release of free IGF2 from IGFBP2-IGF2 complex, which contributes to enhance the motility and the growth of astrocytes. In terms of processing, O-glycosylated.

It is found in the secreted. Functionally, multifunctional protein that plays a critical role in regulating the availability of IGFs such as IGF1 and IGF2 to their receptors and thereby regulates IGF-mediated cellular processes including proliferation, differentiation, and apoptosis in a cell-type specific manner. Functions coordinately with receptor protein tyrosine phosphatase beta/PTPRB and the IGF1 receptor to regulate IGF1-mediated signaling by stimulating the phosphorylation of PTEN leading to its inactivation and AKT1 activation. Plays a positive role in cell migration via interaction with integrin alpha5/ITGA5 through an RGD motif. Additionally, interaction with ITGA5/ITGB1 enhances the adhesion of endothelial progenitor cells to endothelial cells. Upon mitochondrial damage, facilitates apoptosis with ITGA5 of podocytes, and then activates the phosphorylation of focal adhesion kinase (FAK)-mediated mitochondrial injury. The protein is Insulin-like growth factor-binding protein 2 (IGFBP2) of Bos taurus (Bovine).